Here is a 600-residue protein sequence, read N- to C-terminus: NADH-ubiquinone oxidoreductase chain 5 (600 aa).

16 helical membrane-spanning segments follow: residues Met1–Arg21, Gly27–Phe47, Leu81–Thr101, Val110–Ser130, Leu136–Thr156, Phe178–Phe198, Ile200–Ala220, Thr241–Ile261, Leu274–Val294, Val301–Ser323, Phe327–Ile347, Ile366–Leu386, Tyr404–Leu424, Trp450–Thr470, Ser488–Tyr508, and Ser520–Ile540.

Belongs to the complex I subunit 5 family.

The protein resides in the mitochondrion inner membrane. It catalyses the reaction a ubiquinone + NADH + 5 H(+)(in) = a ubiquinol + NAD(+) + 4 H(+)(out). Core subunit of the mitochondrial membrane respiratory chain NADH dehydrogenase (Complex I) that is believed to belong to the minimal assembly required for catalysis. Complex I functions in the transfer of electrons from NADH to the respiratory chain. The immediate electron acceptor for the enzyme is believed to be ubiquinone. The protein is NADH-ubiquinone oxidoreductase chain 5 (ND5) of Metridium senile (Brown sea anemone).